The sequence spans 506 residues: Maturase K (506 aa).

It belongs to the intron maturase 2 family. MatK subfamily.

It is found in the plastid. The protein resides in the chloroplast. Its function is as follows. Usually encoded in the trnK tRNA gene intron. Probably assists in splicing its own and other chloroplast group II introns. The sequence is that of Maturase K from Trifolium microcephalum (Small-head clover).